We begin with the raw amino-acid sequence, 151 residues long: MNPLRKKRLIIILAILVGVGAAVGLALSALQQNINLFYTPTQIANGEAPQDTRIRAGGMVEKGSLQRSTDSLDVKFVVTDFNKSVTITYRGILPDLFREGQGIVALGKLNADGVVVADEVLAKHDEKYMPPEVTKALKDSGQSAPTPAKEG.

At 1-8 (MNPLRKKR) the chain is on the cytoplasmic side. Residues 9 to 29 (LIIILAILVGVGAAVGLALSA) traverse the membrane as a helical; Signal-anchor for type II membrane protein segment. Over 30-151 (LQQNINLFYT…QSAPTPAKEG (122 aa)) the chain is Periplasmic. Residues H124 and Y128 each coordinate heme. Residues 131 to 151 (PEVTKALKDSGQSAPTPAKEG) are disordered.

It belongs to the CcmE/CycJ family.

The protein localises to the cell inner membrane. In terms of biological role, heme chaperone required for the biogenesis of c-type cytochromes. Transiently binds heme delivered by CcmC and transfers the heme to apo-cytochromes in a process facilitated by CcmF and CcmH. This Pseudomonas fluorescens (strain Pf0-1) protein is Cytochrome c-type biogenesis protein CcmE 1.